The sequence spans 379 residues: Probable leucine aminopeptidase ARB_01443 (379 aa).

The first 18 residues, 1–18, serve as a signal peptide directing secretion; that stretch reads MKIATLAVVSAFAATAIA. The Zn(2+) site is built by His-182 and Asp-201. Asn-202 and Asn-226 each carry an N-linked (GlcNAc...) asparagine glycan. Glu-240 and Asp-267 together coordinate Zn(2+). Cysteines 312 and 316 form a disulfide. Residue His-345 coordinates Zn(2+).

Belongs to the peptidase M28 family. M28E subfamily. As to quaternary structure, monomer. It depends on Zn(2+) as a cofactor.

The protein resides in the secreted. Its function is as follows. Probable extracellular aminopeptidase which contributes to pathogenicity. This Arthroderma benhamiae (strain ATCC MYA-4681 / CBS 112371) (Trichophyton mentagrophytes) protein is Probable leucine aminopeptidase ARB_01443.